Here is a 248-residue protein sequence, read N- to C-terminus: Ubiquinone/menaquinone biosynthesis C-methyltransferase UbiE (248 aa).

S-adenosyl-L-methionine contacts are provided by residues serine 68, aspartate 92, and 120–121; that span reads NA.

This sequence belongs to the class I-like SAM-binding methyltransferase superfamily. MenG/UbiE family.

It carries out the reaction a 2-demethylmenaquinol + S-adenosyl-L-methionine = a menaquinol + S-adenosyl-L-homocysteine + H(+). The catalysed reaction is a 2-methoxy-6-(all-trans-polyprenyl)benzene-1,4-diol + S-adenosyl-L-methionine = a 5-methoxy-2-methyl-3-(all-trans-polyprenyl)benzene-1,4-diol + S-adenosyl-L-homocysteine + H(+). The protein operates within quinol/quinone metabolism; menaquinone biosynthesis; menaquinol from 1,4-dihydroxy-2-naphthoate: step 2/2. It participates in cofactor biosynthesis; ubiquinone biosynthesis. In terms of biological role, methyltransferase required for the conversion of demethylmenaquinol (DMKH2) to menaquinol (MKH2) and the conversion of 2-polyprenyl-6-methoxy-1,4-benzoquinol (DDMQH2) to 2-polyprenyl-3-methyl-6-methoxy-1,4-benzoquinol (DMQH2). This is Ubiquinone/menaquinone biosynthesis C-methyltransferase UbiE from Rickettsia prowazekii (strain Madrid E).